The following is a 469-amino-acid chain: RNA-editing ligase 1, mitochondrial (469 aa).

Residues 1-44 (MQLQRLGAPLLKRLVGGCIRQSTAPIMPCVVVSGSGGFLTPVRT) constitute a mitochondrion transit peptide. ATP is bound by residues 59–61 (IEI), 86–92 (EKVHGTN), asparagine 92, arginine 111, glutamate 159, phenylalanine 209, and 307–309 (KLR). Lysine 87 (N6-AMP-lysine intermediate) is an active-site residue. The tract at residues 450 to 469 (AAAQSEAIPPLSPAAPTKGE) is disordered.

This sequence belongs to the RNA ligase 2 family. Component of the RNA editing complex (editosome), a 1600 kDa complex composed of at least 20 proteins. Interacts with terminal uridylyltransferase MEAT1.

It localises to the mitochondrion. The enzyme catalyses ATP + (ribonucleotide)n-3'-hydroxyl + 5'-phospho-(ribonucleotide)m = (ribonucleotide)n+m + AMP + diphosphate.. Functionally, essential for RNA editing. RNA editing in kinetoplastid mitochondria inserts and deletes uridylates at multiple sites in pre-mRNAs as directed by guide RNAs. This is RNA-editing ligase 1, mitochondrial (REL1) from Trypanosoma brucei brucei (strain 927/4 GUTat10.1).